We begin with the raw amino-acid sequence, 128 residues long: Mediator of RNA polymerase II transcription subunit 31 (128 aa).

Belongs to the Mediator complex subunit 31 family. In terms of assembly, component of the Mediator complex.

It localises to the nucleus. Functionally, component of the Mediator complex, a coactivator involved in the regulated transcription of nearly all RNA polymerase II-dependent genes. Mediator functions as a bridge to convey information from gene-specific regulatory proteins to the basal RNA polymerase II transcription machinery. Mediator is recruited to promoters by direct interactions with regulatory proteins and serves as a scaffold for the assembly of a functional preinitiation complex with RNA polymerase II and the general transcription factors. The chain is Mediator of RNA polymerase II transcription subunit 31 (med31) from Xenopus tropicalis (Western clawed frog).